Consider the following 376-residue polypeptide: Lipoyl synthase, mitochondrial (376 aa).

Residues cysteine 102, cysteine 107, cysteine 113, cysteine 133, cysteine 137, cysteine 140, and serine 348 each contribute to the [4Fe-4S] cluster site. One can recognise a Radical SAM core domain in the interval 116 to 337 (GGEDKTATAT…EEVGGEMGFA (222 aa)).

Belongs to the radical SAM superfamily. Lipoyl synthase family. Requires [4Fe-4S] cluster as cofactor.

Its subcellular location is the mitochondrion. It catalyses the reaction [[Fe-S] cluster scaffold protein carrying a second [4Fe-4S](2+) cluster] + N(6)-octanoyl-L-lysyl-[protein] + 2 oxidized [2Fe-2S]-[ferredoxin] + 2 S-adenosyl-L-methionine + 4 H(+) = [[Fe-S] cluster scaffold protein] + N(6)-[(R)-dihydrolipoyl]-L-lysyl-[protein] + 4 Fe(3+) + 2 hydrogen sulfide + 2 5'-deoxyadenosine + 2 L-methionine + 2 reduced [2Fe-2S]-[ferredoxin]. The protein operates within protein modification; protein lipoylation via endogenous pathway; protein N(6)-(lipoyl)lysine from octanoyl-[acyl-carrier-protein]: step 2/2. Functionally, catalyzes the radical-mediated insertion of two sulfur atoms into the C-6 and C-8 positions of the octanoyl moiety bound to the lipoyl domains of lipoate-dependent enzymes, thereby converting the octanoylated domains into lipoylated derivatives. In Branchiostoma floridae (Florida lancelet), this protein is Lipoyl synthase, mitochondrial.